Reading from the N-terminus, the 1366-residue chain is DNA-directed RNA polymerase subunit beta'' (1366 aa).

Positions 220, 290, 297, and 300 each coordinate Zn(2+).

The protein belongs to the RNA polymerase beta' chain family. RpoC2 subfamily. In plastids the minimal PEP RNA polymerase catalytic core is composed of four subunits: alpha, beta, beta', and beta''. When a (nuclear-encoded) sigma factor is associated with the core the holoenzyme is formed, which can initiate transcription. It depends on Zn(2+) as a cofactor.

The protein localises to the plastid. Its subcellular location is the chloroplast. It catalyses the reaction RNA(n) + a ribonucleoside 5'-triphosphate = RNA(n+1) + diphosphate. Its function is as follows. DNA-dependent RNA polymerase catalyzes the transcription of DNA into RNA using the four ribonucleoside triphosphates as substrates. The chain is DNA-directed RNA polymerase subunit beta'' from Lemna minor (Common duckweed).